A 521-amino-acid chain; its full sequence is Adenosylhomocysteinase-like 1 (521 aa).

Residues 1-92 (MNNLADTVVV…EKVQKNSKGS (92 aa)) are disordered. A compositionally biased stretch (low complexity) spans 54 to 73 (RSLSASSTDSFSSASYTGSS). Substrate is bound by residues Asp220 and Glu245. 246 to 248 (SVT) provides a ligand contact to NAD(+). The substrate site is built by Lys275 and Asp279. NAD(+) contacts are provided by residues 311 to 316 (GDVGKG), Glu332, 388 to 390 (MGH), Asn435, Lys515, 515 to 519 (KPNYY), and Tyr519.

It belongs to the adenosylhomocysteinase family. In terms of assembly, interacts with Ahcy; the interaction may negatively regulate Ahcy catalytic activity. It depends on NAD(+) as a cofactor.

Its function is as follows. Might play a role in the regulation of methionine metabolism possibly by binding and inactivating Ahcy. This is Adenosylhomocysteinase-like 1 from Drosophila melanogaster (Fruit fly).